Here is a 232-residue protein sequence, read N- to C-terminus: 7-cyano-7-deazaguanine synthase (232 aa).

Position 7-17 (7-17 (LSGGLDSTVVT)) interacts with ATP. Residues Cys-195, Cys-206, Cys-209, and Cys-212 each contribute to the Zn(2+) site.

Belongs to the QueC family. Zn(2+) is required as a cofactor.

The catalysed reaction is 7-carboxy-7-deazaguanine + NH4(+) + ATP = 7-cyano-7-deazaguanine + ADP + phosphate + H2O + H(+). It participates in purine metabolism; 7-cyano-7-deazaguanine biosynthesis. Its function is as follows. Catalyzes the ATP-dependent conversion of 7-carboxy-7-deazaguanine (CDG) to 7-cyano-7-deazaguanine (preQ(0)). This chain is 7-cyano-7-deazaguanine synthase, found in Methanocaldococcus jannaschii (strain ATCC 43067 / DSM 2661 / JAL-1 / JCM 10045 / NBRC 100440) (Methanococcus jannaschii).